The following is a 291-amino-acid chain: MEKNSSLWKSLVTEHPLCTTWKQEAEGAIYHLASILFVVGFMGGSGFFGLLYVFSLLGLGFLSSAVWAWVDICAADIFSWNFVLFVICFMQFVHIAYQVHSITFARDFHVLYSSLFKPLGIPLPVFRTIALSSEVVSLEKEHCYAMQGKTSIDRLSVLISGRIRVTVDGEFLHYISPFQFLDSPEWDSLRPTEEGIFQVTLTADTDCRYVSWRRKKLYLLFAQHRYISRLFSVLIGSDIADKLYALNDRVYIGKKHHYDIRLPNYYHMSTPDLSRSPLTEQFRNSRQHCNK.

The N-linked (GlcNAc...) asparagine glycan is linked to N4. A run of 3 helical transmembrane segments spans residues 27–44 (GAIY…FMGG), 48–70 (FGLL…WAWV), and 77–99 (IFSW…AYQV).

Belongs to the popeye family. As to expression, expressed in cardiac and skeletal muscle.

The protein localises to the membrane. Its function is as follows. May play a role in the maintenance of heart function mediated, at least in part, through cAMP-binding. May play a role in the regulation of KCNK2-mediated current amplitude. The sequence is that of Popeye domain-containing protein 3 (Popdc3) from Mus musculus (Mouse).